The chain runs to 339 residues: Centromere protein N (339 aa).

Phosphoserine occurs at positions 226, 235, and 282.

This sequence belongs to the CENP-N/CHL4 family. As to quaternary structure, component of the CENPA-NAC complex, at least composed of CENPA, CENPC, CENPH, CENPM, CENPN, CENPT and CENPU. The CENPA-NAC complex interacts with the CENPA-CAD complex, composed of CENPI, CENPK, CENPL, CENPO, CENPP, CENPQ, CENPR and CENPS. Interacts directly with CENPA. Identified in a centromere complex containing histones H2A, H2B and H4, and at least CENPA, CENPB, CENPC, CENPT, CENPN, HJURP, SUPT16H, SSRP1 and RSF1.

It is found in the nucleus. The protein resides in the chromosome. The protein localises to the centromere. It localises to the kinetochore. In terms of biological role, component of the CENPA-NAC (nucleosome-associated) complex, a complex that plays a central role in assembly of kinetochore proteins, mitotic progression and chromosome segregation. The CENPA-NAC complex recruits the CENPA-CAD (nucleosome distal) complex and may be involved in incorporation of newly synthesized CENPA into centromeres. CENPN is the first protein to bind specifically to CENPA nucleosomes and the direct binding of CENPA nucleosomes by CENPN is required for centromere assembly. Required for chromosome congression and efficiently align the chromosomes on a metaphase plate. The protein is Centromere protein N (CENPN) of Homo sapiens (Human).